Reading from the N-terminus, the 673-residue chain is UvrABC system protein B (673 aa).

The Helicase ATP-binding domain maps to 26 to 415 (EGLEDGLAHQ…GDVVDQVVRP (390 aa)). 39 to 46 (GVTGSGKT) contacts ATP. A Beta-hairpin motif is present at residues 92–115 (YYDYYQPEAYVPSSDTFIEKDASV). One can recognise a Helicase C-terminal domain in the interval 431-597 (QVDDLLSEIR…GLNKKVVDIL (167 aa)). Residues 608–627 (AKGRGKSRPIVEPDNVPMDM) form a disordered region. Positions 633-668 (QQKIHELEGLMMQHAQNLEFEEAAQIRDQLHQLREL) constitute a UVR domain.

It belongs to the UvrB family. In terms of assembly, forms a heterotetramer with UvrA during the search for lesions. Interacts with UvrC in an incision complex.

It is found in the cytoplasm. Its function is as follows. The UvrABC repair system catalyzes the recognition and processing of DNA lesions. A damage recognition complex composed of 2 UvrA and 2 UvrB subunits scans DNA for abnormalities. Upon binding of the UvrA(2)B(2) complex to a putative damaged site, the DNA wraps around one UvrB monomer. DNA wrap is dependent on ATP binding by UvrB and probably causes local melting of the DNA helix, facilitating insertion of UvrB beta-hairpin between the DNA strands. Then UvrB probes one DNA strand for the presence of a lesion. If a lesion is found the UvrA subunits dissociate and the UvrB-DNA preincision complex is formed. This complex is subsequently bound by UvrC and the second UvrB is released. If no lesion is found, the DNA wraps around the other UvrB subunit that will check the other stand for damage. In Escherichia coli O6:H1 (strain CFT073 / ATCC 700928 / UPEC), this protein is UvrABC system protein B.